Here is a 156-residue protein sequence, read N- to C-terminus: MKNQIYMEFYKKLKEIVEPICEKYSYELVDLEYRREPHGWVLRVYIDKVGGVTVEDCAYLSEKISKELDIKDPIPHSYILEVSSPGLDRPLKRKRDFERHMGEKVNITLLEEIEGKKKFEGKIFKVDESSVTLKIDDSFVTIPLEKIKKAMLIVEF.

It belongs to the RimP family.

It is found in the cytoplasm. Its function is as follows. Required for maturation of 30S ribosomal subunits. The chain is Ribosome maturation factor RimP from Dictyoglomus thermophilum (strain ATCC 35947 / DSM 3960 / H-6-12).